The primary structure comprises 554 residues: Arginine--tRNA ligase (554 aa).

The 'HIGH' region signature appears at 132–142; sequence ANPTGPIHLGG.

Belongs to the class-I aminoacyl-tRNA synthetase family. Monomer.

The protein localises to the cytoplasm. The enzyme catalyses tRNA(Arg) + L-arginine + ATP = L-arginyl-tRNA(Arg) + AMP + diphosphate. The chain is Arginine--tRNA ligase from Kineococcus radiotolerans (strain ATCC BAA-149 / DSM 14245 / SRS30216).